We begin with the raw amino-acid sequence, 323 residues long: DNA-directed RNA polymerase subunit alpha (323 aa).

Positions methionine 1–asparagine 225 are alpha N-terminal domain (alpha-NTD). Residues isoleucine 246–glycine 323 are alpha C-terminal domain (alpha-CTD).

The protein belongs to the RNA polymerase alpha chain family. Homodimer. The RNAP catalytic core consists of 2 alpha, 1 beta, 1 beta' and 1 omega subunit. When a sigma factor is associated with the core the holoenzyme is formed, which can initiate transcription.

The catalysed reaction is RNA(n) + a ribonucleoside 5'-triphosphate = RNA(n+1) + diphosphate. DNA-dependent RNA polymerase catalyzes the transcription of DNA into RNA using the four ribonucleoside triphosphates as substrates. This Roseiflexus sp. (strain RS-1) protein is DNA-directed RNA polymerase subunit alpha.